We begin with the raw amino-acid sequence, 338 residues long: RNA 3'-terminal phosphate cyclase (338 aa).

ATP-binding positions include Gln103 and Tyr283–Gln287. His308 functions as the Tele-AMP-histidine intermediate in the catalytic mechanism.

It belongs to the RNA 3'-terminal cyclase family. Type 1 subfamily.

The protein localises to the cytoplasm. The catalysed reaction is a 3'-end 3'-phospho-ribonucleotide-RNA + ATP = a 3'-end 2',3'-cyclophospho-ribonucleotide-RNA + AMP + diphosphate. Functionally, catalyzes the conversion of 3'-phosphate to a 2',3'-cyclic phosphodiester at the end of RNA. The mechanism of action of the enzyme occurs in 3 steps: (A) adenylation of the enzyme by ATP; (B) transfer of adenylate to an RNA-N3'P to produce RNA-N3'PP5'A; (C) and attack of the adjacent 2'-hydroxyl on the 3'-phosphorus in the diester linkage to produce the cyclic end product. The biological role of this enzyme is unknown but it is likely to function in some aspects of cellular RNA processing. The sequence is that of RNA 3'-terminal phosphate cyclase from Escherichia coli O8 (strain IAI1).